We begin with the raw amino-acid sequence, 57 residues long: Putative antitoxin VapB4 (57 aa).

Functionally, possibly the antitoxin component of a type II toxin-antitoxin (TA) system. Its cognate toxin is VapC4 (Potential). The polypeptide is Putative antitoxin VapB4 (vapB4) (Methanocaldococcus jannaschii (strain ATCC 43067 / DSM 2661 / JAL-1 / JCM 10045 / NBRC 100440) (Methanococcus jannaschii)).